A 60-amino-acid polypeptide reads, in one-letter code: Large ribosomal subunit protein bL32 (60 aa).

Positions 1-21 (MAVQQNKKSPSKRGMHRAHNA) are disordered. Basic residues predominate over residues 9-19 (SPSKRGMHRAH).

It belongs to the bacterial ribosomal protein bL32 family.

In Albidiferax ferrireducens (strain ATCC BAA-621 / DSM 15236 / T118) (Rhodoferax ferrireducens), this protein is Large ribosomal subunit protein bL32.